The sequence spans 83 residues: Tetracenomycin polyketide synthase acyl carrier protein (83 aa).

Residues Gln3–Ala83 enclose the Carrier domain. Ser41 carries the O-(pantetheine 4'-phosphoryl)serine modification.

In terms of assembly, the tetracenomycin polyketide synthase (TCM PKS) is composed of a ketosynthase complex (TcmKL), an acyl carrier protein (TcmM), a cyclase (TcmN) and a probable second cyclase (TcmJ). Pantetheine 4'-phosphate serves as cofactor. In terms of processing, 4'-phosphopantetheine is transferred from CoA to a specific serine of apo-ACP.

The enzyme catalyses 10 malonyl-CoA + 8 H(+) = tetracenomycin F2 + 10 CO2 + 10 CoA + 2 H2O. It participates in antibiotic biosynthesis; tetracenomycin C biosynthesis. Functionally, involved in the biosynthesis of tetracenomycin C (TCM C). Part of a type II polyketide synthase (PKS) that catalyzes the synthesis of tetracenomycin F2 (TCM F2), a precursor of TCM C, from malonyl-CoA. TcmM is an acyl carrier protein that serves as an acceptor of malonate from malonyl-CoA and acts as the tether for the substrates and intermediates of polyketide assembly. The malonyl CoA-acyl carrier protein transacylase FabD (MCT) is required to catalyze the transacylation between malonyl-CoA and TcmM, although a relatively slow spontaneous self-malonylation of TcmM also occurs in a reaction without the MCT. In Streptomyces glaucescens, this protein is Tetracenomycin polyketide synthase acyl carrier protein.